We begin with the raw amino-acid sequence, 462 residues long: Cytochrome P450 20A1 (462 aa).

A helical transmembrane segment spans residues 4 to 24 (FAIFAVTFLLALVGAVLYLYP). Cys-409 provides a ligand contact to heme.

Belongs to the cytochrome P450 family. The cofactor is heme.

It is found in the membrane. The polypeptide is Cytochrome P450 20A1 (CYP20A1) (Homo sapiens (Human)).